Consider the following 439-residue polypeptide: Methylenetetrahydrofolate--tRNA-(uracil-5-)-methyltransferase TrmFO (439 aa).

7–12 lines the FAD pocket; sequence GAGLAG.

It belongs to the MnmG family. TrmFO subfamily. Requires FAD as cofactor.

The protein resides in the cytoplasm. The catalysed reaction is uridine(54) in tRNA + (6R)-5,10-methylene-5,6,7,8-tetrahydrofolate + NADH + H(+) = 5-methyluridine(54) in tRNA + (6S)-5,6,7,8-tetrahydrofolate + NAD(+). The enzyme catalyses uridine(54) in tRNA + (6R)-5,10-methylene-5,6,7,8-tetrahydrofolate + NADPH + H(+) = 5-methyluridine(54) in tRNA + (6S)-5,6,7,8-tetrahydrofolate + NADP(+). In terms of biological role, catalyzes the folate-dependent formation of 5-methyl-uridine at position 54 (M-5-U54) in all tRNAs. The sequence is that of Methylenetetrahydrofolate--tRNA-(uracil-5-)-methyltransferase TrmFO from Heliobacterium modesticaldum (strain ATCC 51547 / Ice1).